The sequence spans 136 residues: UPF0310 protein HH_1062 (136 aa).

This sequence belongs to the UPF0310 family.

This Helicobacter hepaticus (strain ATCC 51449 / 3B1) protein is UPF0310 protein HH_1062.